A 67-amino-acid chain; its full sequence is MSVASEMREMSVEALDDKMKALYQEAFNLRFQHATAQLENTSRIRQVRREIALIKTVIGERKAKEEV.

This sequence belongs to the universal ribosomal protein uL29 family.

This Magnetococcus marinus (strain ATCC BAA-1437 / JCM 17883 / MC-1) protein is Large ribosomal subunit protein uL29.